A 272-amino-acid chain; its full sequence is Small ribosomal subunit protein mS23 (272 aa).

Positions 236 to 272 (AGATGGAKEESDPAILPELEVAESTSESAQPAEIRTG) are disordered.

This sequence belongs to the mitochondrion-specific ribosomal protein mS23 family. Component of the mitochondrial small ribosomal subunit.

The protein resides in the mitochondrion. The sequence is that of Small ribosomal subunit protein mS23 (RSM25) from Coccidioides immitis (strain RS) (Valley fever fungus).